The primary structure comprises 273 residues: Polyamine aminopropyltransferase (273 aa).

The 234-residue stretch at 5 to 238 (ENWFSERYSD…GFWSFTIASE (234 aa)) folds into the PABS domain. Gln34 serves as a coordination point for S-methyl-5'-thioadenosine. 2 residues coordinate spermidine: His65 and Asp90. Residues Glu109 and 140 to 141 (DG) contribute to the S-methyl-5'-thioadenosine site. Asp158 (proton acceptor) is an active-site residue. 158–161 (DSTD) provides a ligand contact to spermidine. Pro165 serves as a coordination point for S-methyl-5'-thioadenosine.

It belongs to the spermidine/spermine synthase family. As to quaternary structure, homodimer or homotetramer.

The protein resides in the cytoplasm. The enzyme catalyses S-adenosyl 3-(methylsulfanyl)propylamine + putrescine = S-methyl-5'-thioadenosine + spermidine + H(+). Its pathway is amine and polyamine biosynthesis; spermidine biosynthesis; spermidine from putrescine: step 1/1. Catalyzes the irreversible transfer of a propylamine group from the amino donor S-adenosylmethioninamine (decarboxy-AdoMet) to putrescine (1,4-diaminobutane) to yield spermidine. The sequence is that of Polyamine aminopropyltransferase from Thermoplasma volcanium (strain ATCC 51530 / DSM 4299 / JCM 9571 / NBRC 15438 / GSS1).